The primary structure comprises 203 residues: dITP/XTP pyrophosphatase (203 aa).

16 to 21 contacts substrate; sequence SHNRGK. 2 residues coordinate Mg(2+): glutamate 48 and aspartate 77. Aspartate 77 (proton acceptor) is an active-site residue. Substrate-binding positions include serine 78, 161–164, lysine 184, and 189–190; these read FGYD and HR.

Belongs to the HAM1 NTPase family. In terms of assembly, homodimer. Mg(2+) is required as a cofactor.

It carries out the reaction XTP + H2O = XMP + diphosphate + H(+). The catalysed reaction is dITP + H2O = dIMP + diphosphate + H(+). The enzyme catalyses ITP + H2O = IMP + diphosphate + H(+). In terms of biological role, pyrophosphatase that catalyzes the hydrolysis of nucleoside triphosphates to their monophosphate derivatives, with a high preference for the non-canonical purine nucleotides XTP (xanthosine triphosphate), dITP (deoxyinosine triphosphate) and ITP. Seems to function as a house-cleaning enzyme that removes non-canonical purine nucleotides from the nucleotide pool, thus preventing their incorporation into DNA/RNA and avoiding chromosomal lesions. This Rhodospirillum centenum (strain ATCC 51521 / SW) protein is dITP/XTP pyrophosphatase.